A 392-amino-acid chain; its full sequence is Formate-dependent phosphoribosylglycinamide formyltransferase (392 aa).

N(1)-(5-phospho-beta-D-ribosyl)glycinamide-binding positions include 20–21 and Glu80; that span reads EL. Residues Arg112, Lys153, 158–163, 193–196, and Glu201 contribute to the ATP site; these read SSGKGQ and EGFV. The 190-residue stretch at 117-306 folds into the ATP-grasp domain; that stretch reads RLAAETLGLP…EFALHVRAIL (190 aa). Mg(2+) is bound by residues Glu265 and Glu277. Residues Asp284, Lys355, and 362 to 363 contribute to the N(1)-(5-phospho-beta-D-ribosyl)glycinamide site; that span reads RR.

It belongs to the PurK/PurT family. Homodimer.

It carries out the reaction N(1)-(5-phospho-beta-D-ribosyl)glycinamide + formate + ATP = N(2)-formyl-N(1)-(5-phospho-beta-D-ribosyl)glycinamide + ADP + phosphate + H(+). It participates in purine metabolism; IMP biosynthesis via de novo pathway; N(2)-formyl-N(1)-(5-phospho-D-ribosyl)glycinamide from N(1)-(5-phospho-D-ribosyl)glycinamide (formate route): step 1/1. Involved in the de novo purine biosynthesis. Catalyzes the transfer of formate to 5-phospho-ribosyl-glycinamide (GAR), producing 5-phospho-ribosyl-N-formylglycinamide (FGAR). Formate is provided by PurU via hydrolysis of 10-formyl-tetrahydrofolate. This Aeromonas hydrophila subsp. hydrophila (strain ATCC 7966 / DSM 30187 / BCRC 13018 / CCUG 14551 / JCM 1027 / KCTC 2358 / NCIMB 9240 / NCTC 8049) protein is Formate-dependent phosphoribosylglycinamide formyltransferase.